Consider the following 561-residue polypeptide: Arf-GAP domain and FG repeat-containing protein 1 (561 aa).

One can recognise an Arf-GAP domain in the interval 11-135 (EKHLKMLRDM…WYVPPEQAKV (125 aa)). The C4-type zinc finger occupies 29 to 52 (CFDCDQRGPTYVNMTVGSFVCTSC). Residue Ser167 is modified to Phosphoserine. Residues 171-193 (LHLNKGTPTQSPVVGRSQGQQQE) are disordered. The span at 176–191 (GTPTQSPVVGRSQGQQ) shows a compositional bias: polar residues. Thr177 carries the post-translational modification Phosphothreonine. Phosphoserine occurs at positions 181 and 362. A glycan (O-linked (GlcNAc) serine) is linked at Ser367. The tract at residues 409-451 (PVGASPQTQPASSGPAPFGATPSTNPFVAATGPSAASSTNPFQ) is disordered. Over residues 442 to 451 (SAASSTNPFQ) the composition is skewed to polar residues.

In terms of assembly, interacts with EPS15R and EPS15. Interacts with FCHO1. In terms of processing, O-glycosylated.

It is found in the nucleus. Its subcellular location is the cytoplasmic vesicle. Functionally, required for vesicle docking or fusion during acrosome biogenesis. May play a role in RNA trafficking or localization. In Rattus norvegicus (Rat), this protein is Arf-GAP domain and FG repeat-containing protein 1 (Agfg1).